The chain runs to 273 residues: 3-methyl-2-oxobutanoate hydroxymethyltransferase 3 (273 aa).

Mg(2+) contacts are provided by aspartate 49 and aspartate 88. 3-methyl-2-oxobutanoate is bound by residues 49-50 (DS), aspartate 88, and lysine 118. Glutamate 120 is a Mg(2+) binding site. Glutamate 187 acts as the Proton acceptor in catalysis.

It belongs to the PanB family. As to quaternary structure, homodecamer; pentamer of dimers. Requires Mg(2+) as cofactor.

Its subcellular location is the cytoplasm. The enzyme catalyses 3-methyl-2-oxobutanoate + (6R)-5,10-methylene-5,6,7,8-tetrahydrofolate + H2O = 2-dehydropantoate + (6S)-5,6,7,8-tetrahydrofolate. It functions in the pathway cofactor biosynthesis; (R)-pantothenate biosynthesis; (R)-pantoate from 3-methyl-2-oxobutanoate: step 1/2. Its function is as follows. Catalyzes the reversible reaction in which hydroxymethyl group from 5,10-methylenetetrahydrofolate is transferred onto alpha-ketoisovalerate to form ketopantoate. This Bradyrhizobium diazoefficiens (strain JCM 10833 / BCRC 13528 / IAM 13628 / NBRC 14792 / USDA 110) protein is 3-methyl-2-oxobutanoate hydroxymethyltransferase 3.